The following is a 189-amino-acid chain: GTP cyclohydrolase 1 (189 aa).

Cys78, His81, and Cys150 together coordinate Zn(2+).

This sequence belongs to the GTP cyclohydrolase I family. As to quaternary structure, toroid-shaped homodecamer, composed of two pentamers of five dimers.

It carries out the reaction GTP + H2O = 7,8-dihydroneopterin 3'-triphosphate + formate + H(+). The protein operates within cofactor biosynthesis; 7,8-dihydroneopterin triphosphate biosynthesis; 7,8-dihydroneopterin triphosphate from GTP: step 1/1. This Listeria innocua serovar 6a (strain ATCC BAA-680 / CLIP 11262) protein is GTP cyclohydrolase 1.